The sequence spans 814 residues: Acyl-coenzyme A dehydrogenase (814 aa).

Glu-497 serves as the catalytic Proton acceptor.

It belongs to the acyl-CoA dehydrogenase family. Requires FAD as cofactor.

The catalysed reaction is a medium-chain 2,3-saturated fatty acyl-CoA + oxidized [electron-transfer flavoprotein] + H(+) = a medium-chain (2E)-enoyl-CoA + reduced [electron-transfer flavoprotein]. It carries out the reaction a long-chain 2,3-saturated fatty acyl-CoA + oxidized [electron-transfer flavoprotein] + H(+) = a long-chain (2E)-enoyl-CoA + reduced [electron-transfer flavoprotein]. Its pathway is lipid metabolism; fatty acid beta-oxidation. In terms of biological role, catalyzes the dehydrogenation of acyl-coenzymes A (acyl-CoAs) to 2-enoyl-CoAs, the first step of the beta-oxidation cycle of fatty acid degradation. Is required for the utilization of medium- and long-chain fatty acids as sole carbon sources for growth. This Escherichia coli O157:H7 protein is Acyl-coenzyme A dehydrogenase (fadE).